Consider the following 466-residue polypeptide: Keratin, type II cytoskeletal 7 (466 aa).

The residue at position 2 (S2) is an N-acetylserine. Residues S2 and S7 each carry the phosphoserine modification. Positions 2–91 (SLHFGSQVFS…DPSIQQVRQE (90 aa)) are head. S12 carries an O-linked (GlcNAc) serine glycan. A Dimethylated arginine; alternate modification is found at R20. Residue R20 is modified to Omega-N-methylarginine; alternate. S54, S72, and S84 each carry phosphoserine. The coil 1A stretch occupies residues 91 to 127 (EEREQIKTLNNKFASFIDKVRFLEQQNKLLETKWALL). An IF rod domain is found at 92–404 (EREQIKTLNN…KLLEGEESRL (313 aa)). T98 bears the Phosphothreonine mark. A linker 1 region spans residues 128–145 (QEQKSAKSNRLPGIFEAQ). K131 participates in a covalent cross-link: Glycyl lysine isopeptide (Lys-Gly) (interchain with G-Cter in SUMO2). The coil 1B stretch occupies residues 146–237 (IAGLRKQLEA…TLYEQELKEL (92 aa)). K180 carries the N6-acetyllysine modification. The segment at 238-261 (QSEVSDTSVVLSMDNNRSLDLDSI) is linker 12. Phosphoserine is present on S255. The interval 262–400 (IAEVKAQYEE…ATYRKLLEGE (139 aa)) is coil 2. Glycyl lysine isopeptide (Lys-Gly) (interchain with G-Cter in SUMO2) cross-links involve residues K266 and K287. T290 carries the post-translational modification Phosphothreonine. Residues K297 and K332 each participate in a glycyl lysine isopeptide (Lys-Gly) (interchain with G-Cter in SUMO2) cross-link. The tail stretch occupies residues 401–466 (ESRLTGDGVG…TSATSRSPRK (66 aa)).

The protein belongs to the intermediate filament family. As to quaternary structure, heterotetramer of two type I and two type II keratins. Interacts with eukaryotic translation initiator factor 3 (eIF3) subunit EIF3S10. Interacts with GPER1. In terms of processing, arg-20 is dimethylated, probably to asymmetric dimethylarginine.

In terms of biological role, blocks interferon-dependent interphase and stimulates DNA synthesis in cells. This Bos taurus (Bovine) protein is Keratin, type II cytoskeletal 7.